The following is a 787-amino-acid chain: ISWI one complex protein 3 (787 aa).

A compositionally biased stretch (polar residues) spans 1–22; it reads MDSPSNSIQNLQQEAQGSSSAQ. Disordered regions lie at residues 1–137, 672–693, and 749–787; these read MDSP…AHEQ, ILEQ…LPKD, and TEYD…RQRT. The segment covering 40–50 has biased composition (low complexity); sequence DQSVSVSQSSD. Positions 79 to 92 are enriched in basic residues; the sequence is KPKRKRPAPPKKKA. Residues 100–137 show a composition bias toward basic and acidic residues; it reads SNDKVEKKKTTSIAKDGKPTLKTNDKKVAPKPKPAHEQ. Residues 675–689 are compositionally biased toward polar residues; sequence QKSTTDNNPSINTNP. Residues 751–777 are compositionally biased toward acidic residues; sequence YDSEEYVDDEEDDEADIYDDNDNDSSF. The span at 778–787 shows a compositional bias: basic and acidic residues; sequence DDGRVKRQRT.

Component of the ISW1A complex, which at least consists of ISW1 and IOC3.

Its subcellular location is the nucleus. Functionally, functions as a component of the ISW1A complex, which acts in remodeling the chromatin by catalyzing an ATP-dependent alteration in the structure of nucleosomal DNA. The ISW1A complex represses gene expression at initiation through specific positioning of a promoter proximal dinucleosome. The protein is ISWI one complex protein 3 (IOC3) of Saccharomyces cerevisiae (strain ATCC 204508 / S288c) (Baker's yeast).